A 252-amino-acid polypeptide reads, in one-letter code: 3-dehydroquinate dehydratase (252 aa).

3-dehydroquinate contacts are provided by residues S21, E46–R48, and R82. H143 (proton donor/acceptor) is an active-site residue. Residue K170 is the Schiff-base intermediate with substrate of the active site. 3-dehydroquinate-binding residues include R213, S232, and Q236.

It belongs to the type-I 3-dehydroquinase family. In terms of assembly, homodimer.

The enzyme catalyses 3-dehydroquinate = 3-dehydroshikimate + H2O. It participates in metabolic intermediate biosynthesis; chorismate biosynthesis; chorismate from D-erythrose 4-phosphate and phosphoenolpyruvate: step 3/7. Functionally, involved in the third step of the chorismate pathway, which leads to the biosynthesis of aromatic amino acids. Catalyzes the cis-dehydration of 3-dehydroquinate (DHQ) and introduces the first double bond of the aromatic ring to yield 3-dehydroshikimate. The sequence is that of 3-dehydroquinate dehydratase from Escherichia coli O9:H4 (strain HS).